The following is a 418-amino-acid chain: Glutamyl-tRNA reductase (418 aa).

Substrate is bound by residues 49–52, Ser109, 114–116, and Gln120; these read TCNR and EPQ. Cys50 (nucleophile) is an active-site residue. NADP(+) is bound at residue 189-194; the sequence is GAGETI.

This sequence belongs to the glutamyl-tRNA reductase family. As to quaternary structure, homodimer.

It catalyses the reaction (S)-4-amino-5-oxopentanoate + tRNA(Glu) + NADP(+) = L-glutamyl-tRNA(Glu) + NADPH + H(+). Its pathway is porphyrin-containing compound metabolism; protoporphyrin-IX biosynthesis; 5-aminolevulinate from L-glutamyl-tRNA(Glu): step 1/2. Its function is as follows. Catalyzes the NADPH-dependent reduction of glutamyl-tRNA(Glu) to glutamate 1-semialdehyde (GSA). In Enterobacter sp. (strain 638), this protein is Glutamyl-tRNA reductase.